Consider the following 213-residue polypeptide: ATP phosphoribosyltransferase (213 aa).

Belongs to the ATP phosphoribosyltransferase family. Short subfamily. In terms of assembly, heteromultimer composed of HisG and HisZ subunits.

It is found in the cytoplasm. The catalysed reaction is 1-(5-phospho-beta-D-ribosyl)-ATP + diphosphate = 5-phospho-alpha-D-ribose 1-diphosphate + ATP. It participates in amino-acid biosynthesis; L-histidine biosynthesis; L-histidine from 5-phospho-alpha-D-ribose 1-diphosphate: step 1/9. Its function is as follows. Catalyzes the condensation of ATP and 5-phosphoribose 1-diphosphate to form N'-(5'-phosphoribosyl)-ATP (PR-ATP). Has a crucial role in the pathway because the rate of histidine biosynthesis seems to be controlled primarily by regulation of HisG enzymatic activity. In Bacillus velezensis (strain DSM 23117 / BGSC 10A6 / LMG 26770 / FZB42) (Bacillus amyloliquefaciens subsp. plantarum), this protein is ATP phosphoribosyltransferase.